Here is a 370-residue protein sequence, read N- to C-terminus: MNKSETIAVAMSGGVDSSTVAAMLRAEGYNLVGLTMQLWNQRRLAHHEGFGEPGVGRCCSLDDVYDARRVAETLAIPYYVVNQEDRFERDVVKPFVEDYLSGRTPIPCSLCNNHLKFDQLLRTAQQIGAEKIATGHYARNDFNAQTGRWELKRPADRAKDQTYFLFGLTQEQLSRTLFPLGHKTKPEVREDAKNHGLKLFEKPDSQEICFIPNGDYKKFLDAYLEEQGESLPDTSGELVTSSGEVVGHHTGIHNFTVGQRKGLGVATGSPLYVIELRGDKRQVVVGNNDELLTRNLRAKRMNWIAVSDLAQPMRVHAKIRHKHEPAWATIEKTGDDEVLVTFDDPQRAVTPGQAVVLYDGDVVVGGGWIC.

Residues 10-17 (AMSGGVDS) and Met36 contribute to the ATP site. The active-site Nucleophile is Cys111. Residues Cys111 and Cys209 are joined by a disulfide bond. Gly135 serves as a coordination point for ATP. An interaction with tRNA region spans residues 159–161 (KDQ). The active-site Cysteine persulfide intermediate is the Cys209.

The protein belongs to the MnmA/TRMU family.

The protein resides in the cytoplasm. It catalyses the reaction S-sulfanyl-L-cysteinyl-[protein] + uridine(34) in tRNA + AH2 + ATP = 2-thiouridine(34) in tRNA + L-cysteinyl-[protein] + A + AMP + diphosphate + H(+). Its function is as follows. Catalyzes the 2-thiolation of uridine at the wobble position (U34) of tRNA, leading to the formation of s(2)U34. The polypeptide is tRNA-specific 2-thiouridylase MnmA (Koribacter versatilis (strain Ellin345)).